We begin with the raw amino-acid sequence, 525 residues long: Lymphocyte activation gene 3 protein (525 aa).

Positions 1-22 (MWEAQFLGLLFLQPLWVAPVKP) are cleaved as a signal peptide. At 23–450 (LQPGAEVPVV…APGALPAGHL (428 aa)) the chain is on the extracellular side. An Ig-like V-type domain is found at 37 to 167 (GAPAQLPCSP…LSCRLRLRLG (131 aa)). An interaction with FGL1 region spans residues 37–252 (GAPAQLPCSP…LTYRDGFNVS (216 aa)). Cys44 and Cys160 are disulfide-bonded. The segment at 62–97 (TWQHQPDSGPPAAAPGHPLAPGPHPAAPSSWGPRPR) is disordered. Over residues 69–87 (SGPPAAAPGHPLAPGPHPA) the composition is skewed to pro residues. The Ig-like C2-type 1 domain occupies 168–252 (QASMTASPPG…LTYRDGFNVS (85 aa)). A glycan (N-linked (GlcNAc...) asparagine) is linked at Asn188. Cys189 and Cys241 are disulfide-bonded. N-linked (GlcNAc...) asparagine glycosylation is found at Asn250 and Asn256. 2 consecutive Ig-like C2-type domains span residues 265–343 (PTPL…QQLN) and 348–419 (LAII…QGER). Cysteines 282 and 333 form a disulfide. Asn343 carries N-linked (GlcNAc...) asparagine glycosylation. Cys369 and Cys412 form a disulfide bridge. The connecting peptide stretch occupies residues 429–450 (ELSSPGAQRSGRAPGALPAGHL). A helical transmembrane segment spans residues 451-471 (LLFLILGVLSLLLLVTGAFGF). Topologically, residues 472–525 (HLWRRQWRPRRFSALEQGIHPPQAQSKIEELEQEPEPEPEPEPEPEPEPEPEQL) are cytoplasmic. A disordered region spans residues 487-525 (EQGIHPPQAQSKIEELEQEPEPEPEPEPEPEPEPEPEQL). Residues 498–503 (KIEELE) carry the KIEELE motif motif. Residues 501–524 (ELEQEPEPEPEPEPEPEPEPEPEQ) form a 12 X 2 AA tandem repeats of E-X region. Residues 502–525 (LEQEPEPEPEPEPEPEPEPEPEQL) show a composition bias toward acidic residues.

It belongs to the LAG3 family. As to quaternary structure, interacts with MHC class II (MHC-II); selectively recognizes stable complexes of peptide and MHC-II. Interacts with FGL1 (via the Fibrinogen C-terminal domain). In terms of processing, proteolytically cleaved by ADAM10 and ADAM17 within the connecting peptide region, leading to release of Secreted lymphocyte activation gene 3 protein (sLAG-3). ADAM10 mediates constitutive cleavage, but cleavage increases following T-cell activation, whereas shedding by ADAM17 is induced by TCR signaling in a PRKCQ-dependent manner. Primarily expressed in activated T-cells and a subset of natural killer (NK) cells.

Its subcellular location is the cell membrane. It is found in the secreted. In terms of biological role, lymphocyte activation gene 3 protein: Inhibitory receptor on antigen activated T-cells. Delivers inhibitory signals upon binding to ligands, such as FGL1. FGL1 constitutes a major ligand of LAG3 and is responsible for LAG3 T-cell inhibitory function. Following TCR engagement, LAG3 associates with CD3-TCR in the immunological synapse and directly inhibits T-cell activation. May inhibit antigen-specific T-cell activation in synergy with PDCD1/PD-1, possibly by acting as a coreceptor for PDCD1/PD-1. Negatively regulates the proliferation, activation, effector function and homeostasis of both CD8(+) and CD4(+) T-cells. Also mediates immune tolerance: constitutively expressed on a subset of regulatory T-cells (Tregs) and contributes to their suppressive function. Also acts as a negative regulator of plasmacytoid dendritic cell (pDCs) activation. Binds MHC class II (MHC-II); the precise role of MHC-II-binding is however unclear. Functionally, may function as a ligand for MHC class II (MHC-II) on antigen-presenting cells (APC), promoting APC activation/maturation and driving Th1 immune response. This Homo sapiens (Human) protein is Lymphocyte activation gene 3 protein.